The chain runs to 323 residues: Pantothenate kinase (323 aa).

101-108 (GSVAVGKS) is an ATP binding site.

The protein belongs to the prokaryotic pantothenate kinase family.

The protein resides in the cytoplasm. It carries out the reaction (R)-pantothenate + ATP = (R)-4'-phosphopantothenate + ADP + H(+). It participates in cofactor biosynthesis; coenzyme A biosynthesis; CoA from (R)-pantothenate: step 1/5. This Paenarthrobacter aurescens (strain TC1) protein is Pantothenate kinase.